A 398-amino-acid chain; its full sequence is Phosphoglycerate kinase (398 aa).

Residues 21–23, arginine 36, 59–62, arginine 119, and arginine 157 contribute to the substrate site; these read DFN and HLGR. ATP contacts are provided by residues lysine 208, glycine 296, glutamate 327, and 354–357; that span reads GGDS.

This sequence belongs to the phosphoglycerate kinase family. In terms of assembly, monomer.

It localises to the cytoplasm. It catalyses the reaction (2R)-3-phosphoglycerate + ATP = (2R)-3-phospho-glyceroyl phosphate + ADP. The protein operates within carbohydrate degradation; glycolysis; pyruvate from D-glyceraldehyde 3-phosphate: step 2/5. In Lactococcus lactis subsp. cremoris (strain MG1363), this protein is Phosphoglycerate kinase.